Consider the following 299-residue polypeptide: 4-hydroxy-tetrahydrodipicolinate synthase (299 aa).

T45 is a pyruvate binding site. Y133 serves as the catalytic Proton donor/acceptor. The Schiff-base intermediate with substrate role is filled by K161. I203 is a pyruvate binding site.

It belongs to the DapA family. In terms of assembly, homotetramer; dimer of dimers.

It localises to the cytoplasm. The enzyme catalyses L-aspartate 4-semialdehyde + pyruvate = (2S,4S)-4-hydroxy-2,3,4,5-tetrahydrodipicolinate + H2O + H(+). It functions in the pathway amino-acid biosynthesis; L-lysine biosynthesis via DAP pathway; (S)-tetrahydrodipicolinate from L-aspartate: step 3/4. In terms of biological role, catalyzes the condensation of (S)-aspartate-beta-semialdehyde [(S)-ASA] and pyruvate to 4-hydroxy-tetrahydrodipicolinate (HTPA). This chain is 4-hydroxy-tetrahydrodipicolinate synthase, found in Blochmanniella pennsylvanica (strain BPEN).